Reading from the N-terminus, the 70-residue chain is Exodeoxyribonuclease 7 small subunit (70 aa).

Belongs to the XseB family. In terms of assembly, heterooligomer composed of large and small subunits.

It localises to the cytoplasm. It carries out the reaction Exonucleolytic cleavage in either 5'- to 3'- or 3'- to 5'-direction to yield nucleoside 5'-phosphates.. Bidirectionally degrades single-stranded DNA into large acid-insoluble oligonucleotides, which are then degraded further into small acid-soluble oligonucleotides. This chain is Exodeoxyribonuclease 7 small subunit, found in Streptococcus sanguinis (strain SK36).